Reading from the N-terminus, the 230-residue chain is Protein tumorous testis (230 aa).

The RRM domain maps to 37 to 128 (GELFLSCIPR…RELVLKNVES (92 aa)).

In terms of assembly, part of a complex composed of at least tut, bam and bgcn; complex formation does not require RNA. Interacts with bam (via N-terminus); the interaction is direct. Interacts with bgcn; the interaction is indirect and is mediated by bam. As part of the bam-bgcn-tut complex associates with twin; may recruit the CCR4-NOT1 deadenylation complex to mRNA 3'UTRs to mediate post-transcriptional regulation of expression.

The protein resides in the cytoplasm. Functionally, RNA binding protein that forms a complex with bam and bgcn, involved in 3'UTR-dependent regulation of a subset of mRNAs. Preferentially binds a long isoform of mei-P26 transcripts. Involved in 3'UTR-dependent post-transcriptional repression of several 3'-RNA processing factors. Involved in promoting germline stem cell lineage differentiation and mitosis-to-meiosis transition. Required for proper transit amplification of spermatogonia. This Drosophila melanogaster (Fruit fly) protein is Protein tumorous testis.